Reading from the N-terminus, the 123-residue chain is Small ribosomal subunit protein uS12 (123 aa).

Asp-89 bears the 3-methylthioaspartic acid mark.

It belongs to the universal ribosomal protein uS12 family. In terms of assembly, part of the 30S ribosomal subunit. Contacts proteins S8 and S17. May interact with IF1 in the 30S initiation complex.

Functionally, with S4 and S5 plays an important role in translational accuracy. Its function is as follows. Interacts with and stabilizes bases of the 16S rRNA that are involved in tRNA selection in the A site and with the mRNA backbone. Located at the interface of the 30S and 50S subunits, it traverses the body of the 30S subunit contacting proteins on the other side and probably holding the rRNA structure together. The combined cluster of proteins S8, S12 and S17 appears to hold together the shoulder and platform of the 30S subunit. The protein is Small ribosomal subunit protein uS12 of Granulibacter bethesdensis (strain ATCC BAA-1260 / CGDNIH1).